The sequence spans 483 residues: GTPase Der (483 aa).

EngA-type G domains lie at 3 to 167 and 212 to 387; these read FTLA…GEER and LRIA…EIWN. Residues 9 to 16, 56 to 60, 119 to 122, 218 to 225, 265 to 269, and 330 to 333 contribute to the GTP site; these read GRPNVGKS, DTAGL, NKAE, GRPNAGKS, DTAGM, and NKWD. Residues 388–472 form the KH-like domain; it reads RRISTGRLNR…PIRLSLRTSD (85 aa).

This sequence belongs to the TRAFAC class TrmE-Era-EngA-EngB-Septin-like GTPase superfamily. EngA (Der) GTPase family. In terms of assembly, associates with the 50S ribosomal subunit.

GTPase that plays an essential role in the late steps of ribosome biogenesis. This chain is GTPase Der, found in Brucella ovis (strain ATCC 25840 / 63/290 / NCTC 10512).